The primary structure comprises 418 residues: Cobalt-zinc-cadmium resistance protein CzcC (418 aa).

An N-terminal signal peptide occupies residues 1-22 (MRRLFLPLGLAVAFLSPNFAVA).

It belongs to the outer membrane factor (OMF) (TC 1.B.17) family.

It is found in the cell outer membrane. CzcC protein appears to modify the specificity of the system, perhaps by acting on the CzcB protein. When the CzcC protein is added to CzcA and CzcB, the efflux system gains specificity for cadmium and cobalt. The protein is Cobalt-zinc-cadmium resistance protein CzcC (czcC) of Cupriavidus metallidurans (strain ATCC 43123 / DSM 2839 / NBRC 102507 / CH34) (Ralstonia metallidurans).